Reading from the N-terminus, the 192-residue chain is Spermatogenesis-associated protein 3 (192 aa).

A compositionally biased stretch (basic residues) spans 1–15 (MKKVKKKRSEARRHR). Disordered stretches follow at residues 1–65 (MKKV…TTSR) and 161–184 (SRKP…GSGG). A compositionally biased stretch (low complexity) spans 19-59 (SQHASSNSTSQQPSPESTPQQPSPESTPQQPSPESTPQHSS).

The protein resides in the cell projection. The protein localises to the cilium. Its subcellular location is the flagellum. This is Spermatogenesis-associated protein 3 (SPATA3) from Homo sapiens (Human).